The sequence spans 253 residues: Peptidase inhibitor R3HDML (253 aa).

The first 24 residues, 1–24 (MPLLPSTVGLAGLLFWAGQAVNAL), serve as a signal peptide directing secretion. Residues 25–56 (IMPNATPAPAQPESTAMRLLSGLEVPRYRRKR) constitute a propeptide that is removed on maturation. Residues 67-207 (LDYHNHIRAS…HRAAYLVCNY (141 aa)) form the SCP domain. N-linked (GlcNAc...) asparagine glycosylation occurs at N120.

The protein belongs to the CRISP family.

It localises to the secreted. In terms of biological role, putative serine protease inhibitor. In Homo sapiens (Human), this protein is Peptidase inhibitor R3HDML (R3HDML).